A 98-amino-acid polypeptide reads, in one-letter code: Citrate lyase acyl carrier protein (98 aa).

At Ser-14 the chain carries O-(phosphoribosyl dephospho-coenzyme A)serine.

The protein belongs to the CitD family. In terms of assembly, oligomer with a subunit composition of (alpha,beta,gamma)6.

Its subcellular location is the cytoplasm. Functionally, covalent carrier of the coenzyme of citrate lyase. The polypeptide is Citrate lyase acyl carrier protein (Shigella boydii serotype 4 (strain Sb227)).